The following is a 215-amino-acid chain: Small ribosomal subunit protein bS6 (215 aa).

Disordered stretches follow at residues 121 to 153 (RENNPENPDVPVTSGLASTQPRLSRTEKAQKPK) and 187 to 215 (NQRQNQQNNNNNRFDRNRNRQHNRFKDKQ). Residues 144–153 (SRTEKAQKPK) are compositionally biased toward basic and acidic residues. A compositionally biased stretch (low complexity) spans 188–198 (QRQNQQNNNNN). Over residues 199 to 215 (RFDRNRNRQHNRFKDKQ) the composition is skewed to basic and acidic residues.

This sequence belongs to the bacterial ribosomal protein bS6 family.

Functionally, binds together with bS18 to 16S ribosomal RNA. This is Small ribosomal subunit protein bS6 (rpsF) from Mycoplasma pneumoniae (strain ATCC 29342 / M129 / Subtype 1) (Mycoplasmoides pneumoniae).